A 172-amino-acid chain; its full sequence is 6,7-dimethyl-8-ribityllumazine synthase (172 aa).

5-amino-6-(D-ribitylamino)uracil is bound by residues F24, 58–60 (ALE), and 82–84 (AVI). (2S)-2-hydroxy-3-oxobutyl phosphate is bound at residue 87-88 (ET). H90 functions as the Proton donor in the catalytic mechanism. N115 serves as a coordination point for 5-amino-6-(D-ribitylamino)uracil. (2S)-2-hydroxy-3-oxobutyl phosphate is bound at residue R129. A disordered region spans residues 150–172 (ALDQLGDDDEDEEEDEDDEEERA). Acidic residues predominate over residues 154 to 172 (LGDDDEDEEEDEDDEEERA).

Belongs to the DMRL synthase family.

The enzyme catalyses (2S)-2-hydroxy-3-oxobutyl phosphate + 5-amino-6-(D-ribitylamino)uracil = 6,7-dimethyl-8-(1-D-ribityl)lumazine + phosphate + 2 H2O + H(+). The protein operates within cofactor biosynthesis; riboflavin biosynthesis; riboflavin from 2-hydroxy-3-oxobutyl phosphate and 5-amino-6-(D-ribitylamino)uracil: step 1/2. Its function is as follows. Catalyzes the formation of 6,7-dimethyl-8-ribityllumazine by condensation of 5-amino-6-(D-ribitylamino)uracil with 3,4-dihydroxy-2-butanone 4-phosphate. This is the penultimate step in the biosynthesis of riboflavin. In Burkholderia multivorans (strain ATCC 17616 / 249), this protein is 6,7-dimethyl-8-ribityllumazine synthase.